Here is a 225-residue protein sequence, read N- to C-terminus: MHLLIVAAGSGSRMGADRNKLLLPLAGRPVLAWTIDAVMEADSITWVGIVGQPVDRAMIMELLAEAAKPVVWIEGGSTRQESVERGLQALPSVAQHVLIHDGARCLAEAALINRCAEAVVAGAAVIAATPVTDTIKRVDGQGIITGTPDRAELWAAQTPQGFAVEQLKQGHAEAQAKGWTVTDDASLYERLGWPVQVLEASPANIKVTTPFDLTVAEAVIALRAN.

Belongs to the IspD/TarI cytidylyltransferase family. IspD subfamily.

The enzyme catalyses 2-C-methyl-D-erythritol 4-phosphate + CTP + H(+) = 4-CDP-2-C-methyl-D-erythritol + diphosphate. It functions in the pathway isoprenoid biosynthesis; isopentenyl diphosphate biosynthesis via DXP pathway; isopentenyl diphosphate from 1-deoxy-D-xylulose 5-phosphate: step 2/6. In terms of biological role, catalyzes the formation of 4-diphosphocytidyl-2-C-methyl-D-erythritol from CTP and 2-C-methyl-D-erythritol 4-phosphate (MEP). The protein is 2-C-methyl-D-erythritol 4-phosphate cytidylyltransferase of Prochlorococcus marinus (strain MIT 9313).